The chain runs to 825 residues: MERYKALEQLLTELDDFLKVLDQENLSSAAVLKKSGLSELLRLYTKSSSSDEEYIYMNKVSVNGEQNSASPDKVPEEQGPLTNGEPSQHSSAPQKSLPDLPPPKMIPERKQPTVPKIESPEGYYEEAEPFDRSINEDGEAVSSSYESYDEDENSKGKAAPYQWPSPEASIELMRDARICAFLWRKKWLGQWAKQLCVIRDTRLLCYKSSKDHSPQLDVNLRGSSVVHKEKQVRKKGHKLKITPMNADVIVLGLQSKDQAEQWLRVIQEVSGLPSEGASEGNQYTPDAQRLNCQKPDIAEKYLSAAEYGITINGHPEIPETKDVKKKCSAGLKLSNLMNLGRKKSTSLEPPERSLETSSYLNVLVNSQWKSRWCFVRDSHLHFYQDRNRSKVAQQPLSLVGCDVLPDPSPDHLYSFRILHNGEELAKLEAKSSEEMGHWLGLLLSESGSKTDPEELTYDYVDAERVSCIVSAAKTSLLLMQRKFSEPNTYIDGLPSRDCQDDLYDDVEVSELIAVVEPAEEAAPAVDANSGSEPDRVYLDLTPVKSFLHSSSEAQAQASLPAVPHQDDVAETLTVDPKPGTTPEEPHTESPGDPEVQQRQPEVQESSEPIEPTPRITMVKLQAEQQRISFPANCPDTMASAPIAASPPVKEKLRVTSAEIKLGKNRTEAEVKRYTEEKERLERSKEEIRGHLAQLRREKRELKETLLRCTDKGVLAKLEQTLKKIDEECRMEESRRVDLELSIMEVKDNLKKAEAGPVTLGTTVDTTHLDNMSPRPQPKAATPNPPPDSTPVNSASVLKNRPLSVMVTGKGTVLQKAKEWEKKGAS.

The residue at position 56 (Tyr56) is a Phosphotyrosine. Residues Val62–Trp163 form a disordered region. Over residues Pro80 to Gln94 the composition is skewed to polar residues. Position 113 is a phosphothreonine (Thr113). PH domains are found at residues Asp175–Gly271 and Ser353–Gly447. At Ser408 the chain carries Phosphoserine. Tyr413 is modified (phosphotyrosine). At Ser484 the chain carries Phosphoserine. The disordered stretch occupies residues Thr571–Arg614. A compositionally biased stretch (low complexity) spans Pro593 to Pro608. Positions Ala657 to Ala754 form a coiled coil. The segment at Val757 to Pro801 is disordered. Polar residues predominate over residues Leu759–Asp769.

As to quaternary structure, interacts with SRC. Interacts with LCK when tyrosine phosphorylated. In terms of processing, tyrosine phosphorylated (by SRC).

It localises to the cytoplasm. Its function is as follows. May play a role in a signaling cascade by enhancing the kinase activity of SRC. Contributes to SRC-regulated transcription activation. This is Actin filament-associated protein 1-like 2 (Afap1l2) from Mus musculus (Mouse).